Consider the following 465-residue polypeptide: Ribulose bisphosphate carboxylase large chain (465 aa).

K4 carries the post-translational modification N6,N6,N6-trimethyllysine. N113 and T163 together coordinate substrate. K165 functions as the Proton acceptor in the catalytic mechanism. Position 167 (K167) interacts with substrate. K191, D193, and E194 together coordinate Mg(2+). N6-carboxylysine is present on K191. H284 functions as the Proton acceptor in the catalytic mechanism. Substrate-binding residues include R285, H317, and S369.

It belongs to the RuBisCO large chain family. Type I subfamily. As to quaternary structure, heterohexadecamer of 8 large chains and 8 small chains. The cofactor is Mg(2+).

It localises to the plastid. The protein resides in the chloroplast. The enzyme catalyses 2 (2R)-3-phosphoglycerate + 2 H(+) = D-ribulose 1,5-bisphosphate + CO2 + H2O. It catalyses the reaction D-ribulose 1,5-bisphosphate + O2 = 2-phosphoglycolate + (2R)-3-phosphoglycerate + 2 H(+). Functionally, ruBisCO catalyzes two reactions: the carboxylation of D-ribulose 1,5-bisphosphate, the primary event in carbon dioxide fixation, as well as the oxidative fragmentation of the pentose substrate in the photorespiration process. Both reactions occur simultaneously and in competition at the same active site. In Sarracenia flava (Yellow pitcher plant), this protein is Ribulose bisphosphate carboxylase large chain.